The primary structure comprises 347 residues: Protein O-mannose kinase (347 aa).

The Cytoplasmic portion of the chain corresponds to M1–C14. A helical; Signal-anchor for type II membrane protein transmembrane segment spans residues G15 to F35. Residues Y36–L347 lie on the Lumenal side of the membrane. The Protein kinase domain maps to V79–L347.

This sequence belongs to the protein kinase superfamily. Ser/Thr protein kinase family. STKL subfamily.

The protein localises to the endoplasmic reticulum membrane. It carries out the reaction 3-O-[beta-D-GalNAc-(1-&gt;3)-beta-D-GlcNAc-(1-&gt;4)-alpha-D-Man]-L-Thr-[protein] + ATP = 3-O-[beta-D-GalNAc-(1-&gt;3)-beta-D-GlcNAc-(1-&gt;4)-(O-6-P-alpha-D-Man)]-Thr-[protein] + ADP + H(+). Protein O-mannose kinase that specifically mediates phosphorylation at the 6-position of an O-mannose of the trisaccharide (N-acetylgalactosamine (GalNAc)-beta-1,3-N-acetylglucosamine (GlcNAc)-beta-1,4-mannose) to generate phosphorylated O-mannosyl trisaccharide (N-acetylgalactosamine-beta-1,3-N-acetylglucosamine-beta-1,4-(phosphate-6-)mannose). Phosphorylated O-mannosyl trisaccharide is a carbohydrate structure present in alpha-dystroglycan (dag1), which is required for binding laminin G-like domain-containing extracellular proteins with high affinity. Only shows kinase activity when the GalNAc-beta-3-GlcNAc-beta-terminus is linked to the 4-position of O-mannose, suggesting that this disaccharide serves as the substrate recognition motif. The sequence is that of Protein O-mannose kinase (pomk) from Danio rerio (Zebrafish).